A 343-amino-acid chain; its full sequence is MFIDEAKIRVKAGDGGNGCMAFRREKFVPRGGPSGGDGGRGGDIVMESTQRHNTLLYFRYNPEHKAERGEHGMGSNCTGRDGKDIILKVPVGTVVYNAESGELLHDFQQPDERLIVAHGGRGGRGNQHFATSTHQAPREHEMGYPGEEFTLRLELKVLADIGIVGYPNVGKSTLISRISAAKPKIADYPFTTLEPNLGVVTVGEMPHEETFVVADIPGLIEGAHEGAGLGDRFLRHVERTHLLVHLVDVSDASGRPDPVADYKTIAAELANFGGELEDKPVIVVASKIDSVNPDKLKKLAAMAKRRKLPFYEISAVTGQGVQQLKYAMAERVRELRKQTQIEL.

An Obg domain is found at 1–158 (MFIDEAKIRV…FTLRLELKVL (158 aa)). Positions 121-140 (RGGRGNQHFATSTHQAPREH) are disordered. The OBG-type G domain occupies 159–333 (ADIGIVGYPN…LKYAMAERVR (175 aa)). GTP-binding positions include 165 to 172 (GYPNVGKS), 190 to 194 (FTTLE), 215 to 218 (DIPG), 286 to 289 (SKID), and 314 to 316 (SAV). Mg(2+) contacts are provided by Ser172 and Thr192.

Belongs to the TRAFAC class OBG-HflX-like GTPase superfamily. OBG GTPase family. As to quaternary structure, monomer. The cofactor is Mg(2+).

It is found in the cytoplasm. Functionally, an essential GTPase which binds GTP, GDP and possibly (p)ppGpp with moderate affinity, with high nucleotide exchange rates and a fairly low GTP hydrolysis rate. Plays a role in control of the cell cycle, stress response, ribosome biogenesis and in those bacteria that undergo differentiation, in morphogenesis control. The polypeptide is GTPase Obg (Acidobacterium capsulatum (strain ATCC 51196 / DSM 11244 / BCRC 80197 / JCM 7670 / NBRC 15755 / NCIMB 13165 / 161)).